The chain runs to 535 residues: CTP synthase (535 aa).

Positions 1 to 268 are amidoligase domain; that stretch reads MSTKYIFVTG…DQIVCDHLKL (268 aa). Ser14 contributes to the CTP binding site. Residue Ser14 coordinates UTP. ATP is bound at residue 15 to 20; sequence SIGKGI. An L-glutamine-binding site is contributed by Tyr55. An ATP-binding site is contributed by Asp72. Mg(2+) is bound by residues Asp72 and Glu142. CTP-binding positions include 149–151, 189–194, and Lys225; these read DIE and KTKPTQ. UTP is bound by residues 189-194 and Lys225; that span reads KTKPTQ. The region spanning 293–535 is the Glutamine amidotransferase type-1 domain; the sequence is KISLVGKYVE…FVTAAVENSN (243 aa). An L-glutamine-binding site is contributed by Gly355. Cys382 serves as the catalytic Nucleophile; for glutamine hydrolysis. L-glutamine-binding positions include 383-386, Glu406, and Arg464; that span reads LGMQ. Active-site residues include His509 and Glu511.

It belongs to the CTP synthase family. In terms of assembly, homotetramer.

The enzyme catalyses UTP + L-glutamine + ATP + H2O = CTP + L-glutamate + ADP + phosphate + 2 H(+). It catalyses the reaction L-glutamine + H2O = L-glutamate + NH4(+). The catalysed reaction is UTP + NH4(+) + ATP = CTP + ADP + phosphate + 2 H(+). It functions in the pathway pyrimidine metabolism; CTP biosynthesis via de novo pathway; CTP from UDP: step 2/2. Its activity is regulated as follows. Allosterically activated by GTP, when glutamine is the substrate; GTP has no effect on the reaction when ammonia is the substrate. The allosteric effector GTP functions by stabilizing the protein conformation that binds the tetrahedral intermediate(s) formed during glutamine hydrolysis. Inhibited by the product CTP, via allosteric rather than competitive inhibition. Catalyzes the ATP-dependent amination of UTP to CTP with either L-glutamine or ammonia as the source of nitrogen. Regulates intracellular CTP levels through interactions with the four ribonucleotide triphosphates. This is CTP synthase from Streptococcus pneumoniae (strain ATCC BAA-255 / R6).